Reading from the N-terminus, the 287-residue chain is N-methyltransferase verN (287 aa).

Belongs to the methyltransferase superfamily. LaeA methyltransferase family.

Its pathway is mycotoxin biosynthesis. Functionally, N-methyltransferase; part of the gene cluster that mediates the biosynthesis of 11'-deoxyverticillin A, one of the dimeric epipolythiodioxopiperazines (ETPs) from the verticillin family that act as mycotoxins. 11'-deoxyverticillin A is required for normal conidiation. The nonribosomal peptide synthetase verP is speculated to be responsible for condensation of amino acids to form the carbon skeleton of verticillin, whereas the cluster-specific tailoring enzymes are involved in further modifications leading to the production of 11'-deoxyverticillin A. The polypeptide is N-methyltransferase verN (Clonostachys rogersoniana).